The sequence spans 185 residues: MSQEKKEELQSEAQVTKEETPQANEAAAEAEAIVNEFDLLQEELNSLKDKYARVHADFENIKKRLEREKYSAVEYANEKFAKDMIPVMDALHMALSSSSSIIDSAEHLEKLKEGIELTLKQLSTALEKHGITMVSHDAPFDPNIHNAIQSVDSDTVESGQIVQTFQTGYKYKDRPLREAMVVVAN.

Basic and acidic residues predominate over residues 1 to 20 (MSQEKKEELQSEAQVTKEET). A disordered region spans residues 1–28 (MSQEKKEELQSEAQVTKEETPQANEAAA).

Belongs to the GrpE family. Homodimer.

Its subcellular location is the cytoplasm. Functionally, participates actively in the response to hyperosmotic and heat shock by preventing the aggregation of stress-denatured proteins, in association with DnaK and GrpE. It is the nucleotide exchange factor for DnaK and may function as a thermosensor. Unfolded proteins bind initially to DnaJ; upon interaction with the DnaJ-bound protein, DnaK hydrolyzes its bound ATP, resulting in the formation of a stable complex. GrpE releases ADP from DnaK; ATP binding to DnaK triggers the release of the substrate protein, thus completing the reaction cycle. Several rounds of ATP-dependent interactions between DnaJ, DnaK and GrpE are required for fully efficient folding. The sequence is that of Protein GrpE from Sulfurimonas denitrificans (strain ATCC 33889 / DSM 1251) (Thiomicrospira denitrificans (strain ATCC 33889 / DSM 1251)).